The primary structure comprises 389 residues: Arginine biosynthesis bifunctional protein ArgJ (389 aa).

Residues T150, K173, T184, E263, N384, and T389 each coordinate substrate. The active-site Nucleophile is T184.

It belongs to the ArgJ family. In terms of assembly, heterotetramer of two alpha and two beta chains.

It localises to the cytoplasm. The catalysed reaction is N(2)-acetyl-L-ornithine + L-glutamate = N-acetyl-L-glutamate + L-ornithine. It catalyses the reaction L-glutamate + acetyl-CoA = N-acetyl-L-glutamate + CoA + H(+). The protein operates within amino-acid biosynthesis; L-arginine biosynthesis; L-ornithine and N-acetyl-L-glutamate from L-glutamate and N(2)-acetyl-L-ornithine (cyclic): step 1/1. It participates in amino-acid biosynthesis; L-arginine biosynthesis; N(2)-acetyl-L-ornithine from L-glutamate: step 1/4. Its function is as follows. Catalyzes two activities which are involved in the cyclic version of arginine biosynthesis: the synthesis of N-acetylglutamate from glutamate and acetyl-CoA as the acetyl donor, and of ornithine by transacetylation between N(2)-acetylornithine and glutamate. The polypeptide is Arginine biosynthesis bifunctional protein ArgJ (Deinococcus radiodurans (strain ATCC 13939 / DSM 20539 / JCM 16871 / CCUG 27074 / LMG 4051 / NBRC 15346 / NCIMB 9279 / VKM B-1422 / R1)).